Consider the following 225-residue polypeptide: Probable polyketide biosynthesis zinc-dependent hydrolase BaeB (225 aa).

Zn(2+) is bound by residues His-62, His-64, Asp-66, His-67, His-123, Asp-140, and His-181.

It belongs to the metallo-beta-lactamase superfamily. The cofactor is Zn(2+).

It is found in the cytoplasm. The protein operates within antibiotic biosynthesis; bacillaene biosynthesis. Probably involved in some intermediate steps for the synthesis of the antibiotic polyketide bacillaene which is involved in secondary metabolism. The polypeptide is Probable polyketide biosynthesis zinc-dependent hydrolase BaeB (baeB) (Bacillus velezensis (strain DSM 23117 / BGSC 10A6 / LMG 26770 / FZB42) (Bacillus amyloliquefaciens subsp. plantarum)).